The following is a 386-amino-acid chain: Cytotoxic granule associated RNA binding protein TIA1 (386 aa).

Residue Met-1 is modified to N-acetylmethionine. RRM domains lie at 7 to 83, 106 to 184, and 214 to 286; these read KTLY…WATT, FHVF…WATR, and CTVY…WGKE. The interval 355-376 is disordered; it reads GPNYSVPPPQGQNGSMLPSQPA.

Homooligomer; homooligomerization is induced by Zn(2+). Interacts with FASTK; the interactions leads to its phosphorylation. Interacts (via RRM1 and the C-terminal glutamine-rich (Q) sequence) with SNRPC/U1-C (via N-terminus); thereby facilitating spliceosomal U1 snRNP recruitment to 5' splice sites. In terms of processing, phosphorylatedby FASTK; phosphorylation occurs after FAS ligation in FAS-mediated apoptosis and before DNA fragmentation.

It is found in the nucleus. The protein resides in the cytoplasm. Its subcellular location is the stress granule. In terms of biological role, RNA-binding protein involved in the regulation of alternative pre-RNA splicing and mRNA translation by binding to uridine-rich (U-rich) RNA sequences. Binds to U-rich sequences immediately downstream from a 5' splice sites in a uridine-rich small nuclear ribonucleoprotein (U snRNP)-dependent fashion, thereby modulating alternative pre-RNA splicing. Preferably binds to the U-rich IAS1 sequence in a U1 snRNP-dependent manner; this binding is optimal if a 5' splice site is adjacent to IAS1. Activates the use of heterologous 5' splice sites; the activation depends on the intron sequence downstream from the 5' splice site, with a preference for a downstream U-rich sequence. By interacting with SNRPC/U1-C, promotes recruitment and binding of spliceosomal U1 snRNP to 5' splice sites followed by U-rich sequences, thereby facilitating atypical 5' splice site recognition by U1 snRNP. Activates splicing of alternative exons with weak 5' splice sites followed by a U-rich stretch on its own pre-mRNA and on TIAR mRNA. Acts as a modulator of alternative splicing for the apoptotic FAS receptor, thereby promoting apoptosis. Binds to the 5' splice site region of FAS intron 5 to promote accumulation of transcripts that include exon 6 at the expense of transcripts in which exon 6 is skipped, thereby leading to the transcription of a membrane-bound apoptotic FAS receptor, which promotes apoptosis. Binds to a conserved AU-rich cis element in COL2A1 intron 2 and modulates alternative splicing of COL2A1 exon 2. Also binds to the equivalent AT-rich element in COL2A1 genomic DNA, and may thereby be involved in the regulation of transcription. Involved in the repression of mRNA translation by binding to AU-rich elements (AREs) located in mRNA 3' untranslated regions (3' UTRs), including target ARE-bearing mRNAs encoding TNF and PTGS2. Also participates in the cellular response to environmental stress, by acting downstream of the stress-induced phosphorylation of EIF2S1/EIF2A to promote the recruitment of untranslated mRNAs to cytoplasmic stress granules (SGs), leading to stress-induced translational arrest. Formation and recruitment to SGs is regulated by Zn(2+). Possesses nucleolytic activity against cytotoxic lymphocyte target cells. In Mus musculus (Mouse), this protein is Cytotoxic granule associated RNA binding protein TIA1 (Tia1).